Consider the following 305-residue polypeptide: MNAAGVRMVVTRARSRGTGASLRRRGEKAAPLRSGEAAAEERKSYSPVKRRRKAQRLSVAYEASEGEGGEGAEHLQAPSWQPQDWRQQLDNIRTMRSGKDAPVDQLGAEHCFDPSASPKVRRYQVLLSLMLSSQTKDQVTAGAMQRLRARGLTVDSILQTDDSTLGALIYPVGFWRSKVKYIKQTSAILQQRYDGDIPASVAELVALPGVGPKMAHLAMAVAWGTVSGIAVDTHVHRIANRLRWTKKATKSPEETRRALEEWLPRELWSEINGLLVGFGQQTCLPIRPRCQACLNRALCPAARGL.

Residues 1-28 (MNAAGVRMVVTRARSRGTGASLRRRGEK) constitute a mitochondrion transit peptide. The tract at residues 1–83 (MNAAGVRMVV…HLQAPSWQPQ (83 aa)) is disordered. The residue at position 64 (serine 64) is a Phosphoserine. The region spanning 192-216 (RYDGDIPASVAELVALPGVGPKMAH) is the HhH domain. The active-site Nucleophile; for N-glycosylase activity is lysine 213. The [4Fe-4S] cluster site is built by cysteine 283, cysteine 290, cysteine 293, and cysteine 299.

This sequence belongs to the Nth/MutY family. Interacts with YBX1. Interacts with ERCC5/XPG; the interaction stimulates NTHL1 activity and NTHL1 binding to its DNA substrate. Requires [4Fe-4S] cluster as cofactor.

The protein localises to the nucleus. It localises to the mitochondrion. It carries out the reaction 2'-deoxyribonucleotide-(2'-deoxyribose 5'-phosphate)-2'-deoxyribonucleotide-DNA = a 3'-end 2'-deoxyribonucleotide-(2,3-dehydro-2,3-deoxyribose 5'-phosphate)-DNA + a 5'-end 5'-phospho-2'-deoxyribonucleoside-DNA + H(+). In terms of biological role, bifunctional DNA N-glycosylase with associated apurinic/apyrimidinic (AP) lyase function that catalyzes the first step in base excision repair (BER), the primary repair pathway for the repair of oxidative DNA damage. The DNA N-glycosylase activity releases the damaged DNA base from DNA by cleaving the N-glycosidic bond, leaving an AP site. The AP lyase activity cleaves the phosphodiester bond 3' to the AP site by a beta-elimination. Primarily recognizes and repairs oxidative base damage of pyrimidines. The sequence is that of Endonuclease III-like protein 1 from Bos taurus (Bovine).